Here is a 394-residue protein sequence, read N- to C-terminus: Elongation factor Tu (394 aa).

The 195-residue stretch at 10–204 folds into the tr-type G domain; the sequence is KPHVNVGTIG…AVDSYIPQPE (195 aa). Positions 19 to 26 are G1; it reads GHVDHGKT. 19–26 is a binding site for GTP; the sequence is GHVDHGKT. Thr26 lines the Mg(2+) pocket. Positions 60 to 64 are G2; sequence GITIS. The G3 stretch occupies residues 81–84; that stretch reads DCPG. Residues 81 to 85 and 136 to 139 contribute to the GTP site; these read DCPGH and NKCD. The segment at 136 to 139 is G4; that stretch reads NKCD. The interval 174–176 is G5; sequence SAV.

The protein belongs to the TRAFAC class translation factor GTPase superfamily. Classic translation factor GTPase family. EF-Tu/EF-1A subfamily. In terms of assembly, monomer.

Its subcellular location is the cytoplasm. It carries out the reaction GTP + H2O = GDP + phosphate + H(+). Its function is as follows. GTP hydrolase that promotes the GTP-dependent binding of aminoacyl-tRNA to the A-site of ribosomes during protein biosynthesis. This Akkermansia muciniphila (strain ATCC BAA-835 / DSM 22959 / JCM 33894 / BCRC 81048 / CCUG 64013 / CIP 107961 / Muc) protein is Elongation factor Tu.